The chain runs to 1757 residues: Serine/threonine-protein kinase WNK3 (1757 aa).

Residues 1–25 are disordered; the sequence is MATDSGEPASTEDSEKPDGVSFENR. Ser-62 carries the post-translational modification Phosphoserine. The span at 66-82 shows a compositional bias: basic and acidic residues; sequence TEDDKVAESSRRDERKA. A disordered region spans residues 66–85; sequence TEDDKVAESSRRDERKAATN. Positions 146–404 constitute a Protein kinase domain; sequence LKFDIELGRG…IKDLLNHAFF (259 aa). Residues 226 to 229 and Lys-276 contribute to the ATP site; that span reads TELM. Residue Asp-293 is the Proton acceptor of the active site. A phosphoserine; by autocatalysis mark is found at Ser-303 and Ser-307. Residues 536–546 form an interaction with KLHL3 region; sequence EYEETEVDQHV. Phosphothreonine is present on Thr-540. Composition is skewed to polar residues over residues 551–570, 578–604, and 674–689; these read LQGK…SSEP, SDTS…KLTQ, and SVKE…SGNG. 2 disordered regions span residues 551–604 and 674–705; these read LQGK…KLTQ and SVKE…PRPE. At Ser-1039 the chain carries Phosphoserine. Residues 1404-1422 show a composition bias toward polar residues; sequence VATEKNVTSTTEVSVQSGS. 3 disordered regions span residues 1404–1440, 1479–1498, and 1536–1574; these read VATE…QTCT, SLFY…EIED, and ATKD…MTHS. Residues 1479–1491 show a composition bias toward low complexity; the sequence is SLFYSPSSPMSSD. Residues Ser-1550 and Ser-1553 each carry the phosphoserine modification. Basic residues predominate over residues 1555–1566; sequence RRPRSFKSKLRS. Ser-1595 is subject to Phosphoserine. 2 disordered regions span residues 1621–1650 and 1734–1757; these read HFPS…CEST and PGMN…PGPK. Residues 1624–1637 are compositionally biased toward low complexity; sequence SKPSLNQLKQSQQK. Over residues 1641–1650 the composition is skewed to polar residues; it reads ENWNKSCEST. The span at 1742–1757 shows a compositional bias: pro residues; it reads PAPPVQNPASIPPGPK.

The protein belongs to the protein kinase superfamily. Ser/Thr protein kinase family. WNK subfamily. Interacts with WNK1 and WNK4. Mg(2+) serves as cofactor. In terms of processing, autophosphorylated at Ser-303 and Ser-307, promoting its activity. Phosphorylation at Thr-540 prevents interaction with KLHL3 and subsequent ubiquitination and degradation by the BCR(KLHL3) complex. Ubiquitinated by the BCR(KLHL2) complex, leading to its degradation. Ubiquitinated by the BCR(KLHL3) complex, leading to its degradation. As to expression, expressed in pancreatic duct.

It is found in the cytoplasm. The catalysed reaction is L-seryl-[protein] + ATP = O-phospho-L-seryl-[protein] + ADP + H(+). The enzyme catalyses L-threonyl-[protein] + ATP = O-phospho-L-threonyl-[protein] + ADP + H(+). Its activity is regulated as follows. Activated in response to hyperosmotic stress: cell shrinkage promotes formation of a membraneless compartment that concentrates WNK3 with its substrates, OXSR1/OSR1 and STK39/SPAK. Activation requires autophosphorylation of Ser-307 and, to a lower extent, Ser-303. Autophosphorylation and subsequent activation is inhibited by increases in intracellular ionic strength: Cl(-) potently inhibits WNK3 kinase activity via direct binding. Also inhibited by K(+) ions. Kinase activity is inhibited by WNK4. In terms of biological role, serine/threonine-protein kinase component of the WNK3-SPAK/OSR1 kinase cascade, which plays an important role in the regulation of electrolyte homeostasis and regulatory volume increase in response to hyperosmotic stress. WNK3 mediates regulatory volume increase in response to hyperosmotic stress by acting as a molecular crowding sensor, which senses cell shrinkage and mediates formation of a membraneless compartment by undergoing liquid-liquid phase separation. The membraneless compartment concentrates WNK3 with its substrates, OXSR1/OSR1 and STK39/SPAK, promoting WNK3-dependent phosphorylation and activation of downstream kinases OXSR1/OSR1 and STK39/SPAK. Following activation, OXSR1/OSR1 and STK39/SPAK catalyze phosphorylation of ion cotransporters SLC12A1/NKCC2, SLC12A2/NKCC1, SLC12A3/NCC, SLC12A4/KCC1, SLC12A5/KCC2 or SLC12A6/KCC3, regulating their activity. Phosphorylation of Na-K-Cl cotransporters SLC12A2/NKCC1 and SLC12A2/NKCC1 promote their activation and ion influx; simultaneously, phosphorylation of K-Cl cotransporters SLC12A4/KCC1, SLC12A5/KCC2 and SLC12A6/KCC3 inhibits its activity, blocking ion efflux. Phosphorylates WNK4, possibly regulating the activity of SLC12A3/NCC. May also phosphorylate NEDD4L. Also acts as a scaffold protein independently of its protein kinase activity: negatively regulates cell membrane localization of various transporters and channels, such as KCNJ1 and SLC26A9. Increases Ca(2+) influx mediated by TRPV5 and TRPV6 by enhancing their membrane expression level via a kinase-dependent pathway. In Mus musculus (Mouse), this protein is Serine/threonine-protein kinase WNK3.